A 159-amino-acid chain; its full sequence is Transcriptional repressor NrdR (159 aa).

Over residues 1 to 11 (MQCPSCQNTDS) the composition is skewed to polar residues. A disordered region spans residues 1 to 20 (MQCPSCQNTDSRVLESRSAD). A zinc finger lies at 3 to 34 (CPSCQNTDSRVLESRSADSGRSVRRRRECLNC). The 91-residue stretch at 49–139 (INVLKRSGAK…VYRQFNGIND (91 aa)) folds into the ATP-cone domain.

The protein belongs to the NrdR family. Zn(2+) serves as cofactor.

In terms of biological role, negatively regulates transcription of bacterial ribonucleotide reductase nrd genes and operons by binding to NrdR-boxes. The polypeptide is Transcriptional repressor NrdR (Prochlorococcus marinus (strain NATL1A)).